The chain runs to 233 residues: Ribitol-5-phosphate cytidylyltransferase (233 aa).

CTP contacts are provided by residues 7-10 and 80-86; these read LAGG and GADRNET.

This sequence belongs to the IspD/TarI cytidylyltransferase family. TarI subfamily.

It catalyses the reaction D-ribitol 5-phosphate + CTP + H(+) = CDP-L-ribitol + diphosphate. It functions in the pathway cell wall biogenesis; poly(ribitol phosphate) teichoic acid biosynthesis. Functionally, catalyzes the transfer of the cytidylyl group of CTP to D-ribitol 5-phosphate. This chain is Ribitol-5-phosphate cytidylyltransferase, found in Lactiplantibacillus plantarum (strain ATCC BAA-793 / NCIMB 8826 / WCFS1) (Lactobacillus plantarum).